We begin with the raw amino-acid sequence, 329 residues long: Beta-ketoacyl-[acyl-carrier-protein] synthase III (329 aa).

Catalysis depends on residues cysteine 113 and histidine 256. The tract at residues 257 to 261 (QANQR) is ACP-binding. The active site involves asparagine 286.

Belongs to the thiolase-like superfamily. FabH family. As to quaternary structure, homodimer.

It is found in the cytoplasm. It carries out the reaction malonyl-[ACP] + acetyl-CoA + H(+) = 3-oxobutanoyl-[ACP] + CO2 + CoA. The protein operates within lipid metabolism; fatty acid biosynthesis. Functionally, catalyzes the condensation reaction of fatty acid synthesis by the addition to an acyl acceptor of two carbons from malonyl-ACP. Catalyzes the first condensation reaction which initiates fatty acid synthesis and may therefore play a role in governing the total rate of fatty acid production. Possesses both acetoacetyl-ACP synthase and acetyl transacylase activities. Its substrate specificity determines the biosynthesis of branched-chain and/or straight-chain of fatty acids. The sequence is that of Beta-ketoacyl-[acyl-carrier-protein] synthase III from Natranaerobius thermophilus (strain ATCC BAA-1301 / DSM 18059 / JW/NM-WN-LF).